We begin with the raw amino-acid sequence, 528 residues long: Beta-hexosaminidase subunit alpha (528 aa).

An N-terminal signal peptide occupies residues 1–22; sequence MAGCRLWVSLLLAAALACLATA. Positions 23-88 are excised as a propeptide; the sequence is LWPWPQYIQT…PRPSFSNKQQ (66 aa). A disulfide bond links cysteine 58 and cysteine 104. Asparagine 115, asparagine 157, and asparagine 295 each carry an N-linked (GlcNAc...) asparagine glycan. Cysteine 277 and cysteine 328 are disulfide-bonded. Catalysis depends on glutamate 323, which acts as the Proton donor. A critical for hydrolysis GM2 gangliosides region spans residues 422–423; that stretch reads NR. Asparagine 487 carries N-linked (GlcNAc...) asparagine glycosylation. Cysteine 504 and cysteine 521 are oxidised to a cystine.

The protein belongs to the glycosyl hydrolase 20 family. In terms of assembly, there are 3 beta-hexosaminidase isozymes: isozyme A (hexosaminidase A) is a heterodimer composed of one subunit alpha and one subunit beta (chain A and B); isozyme B (hexosaminidase B) is a homodimer of two beta subunits (two chains A and B); isozyme S (hexosaminidase S) is a homodimer of two alpha subunits. The composition of the dimer (isozyme A versus isozyme S) has a significant effect on the substrate specificity of the alpha subunit active site. Ubiquitous. Most abundant in testis, adrenal, epididymis and heart. Low levels seen in the liver.

It localises to the lysosome. It carries out the reaction Hydrolysis of terminal non-reducing N-acetyl-D-hexosamine residues in N-acetyl-beta-D-hexosaminides.. The catalysed reaction is N-acetyl-beta-D-galactosaminyl-(1-&gt;4)-beta-D-3-sulfogalactosyl-(1-&gt;4)-beta-D-glucosyl-(1&lt;-&gt;1')-ceramide + H2O = a beta-D-3-sulfogalactosyl-(1-&gt;4)-beta-D-glucosyl-(1&lt;-&gt;1')-ceramide + N-acetyl-beta-D-galactosamine. The enzyme catalyses a ganglioside GM2 (d18:1(4E)) + H2O = a ganglioside GM3 (d18:1(4E)) + N-acetyl-beta-D-galactosamine. It catalyses the reaction a ganglioside GM2 + H2O = a ganglioside GM3 + N-acetyl-beta-D-galactosamine. It carries out the reaction beta-D-GalNAc-(1-&gt;4)-alpha-L-IdoA-(1-&gt;3)-beta-D-GalNAc-4-sulfate-(1-&gt;4)-alpha-L-IdoA-(1-&gt;3)-D-GalNAc-4-sulfate + H2O = alpha-L-IdoA-(1-&gt;3)-beta-D-GalNAc-4-sulfate-(1-&gt;4)-alpha-L-IdoA-(1-&gt;3)-D-GalNAc-4-sulfate + N-acetyl-D-galactosamine. The catalysed reaction is N-acetyl-beta-D-6-sulfogalactosaminyl-(1-&gt;4)-alpha-L-iduronyl-(1-&gt;3)-N-acetyl-D-6-sulfogalactosamine + H2O = alpha-L-iduronyl-(1-&gt;3)-N-acetyl-D-6-sulfogalactosamine + N-acetyl-D-6-sulfogalactosamine. With respect to regulation, addition of GM2A stimulates the hydrolysis of sulfated glycosphingolipid SM2 and the ganglioside GM2. In terms of biological role, hydrolyzes the non-reducing end N-acetyl-D-hexosamine and/or sulfated N-acetyl-D-hexosamine of glycoconjugates, such as the oligosaccharide moieties from proteins and neutral glycolipids, or from certain mucopolysaccharides. The isozyme S is as active as the isozyme A on the anionic bis-sulfated glycans, the chondroitin-6-sulfate trisaccharide (C6S-3), and the dermatan sulfate pentasaccharide, and the sulfated glycosphingolipid SM2. The isozyme B does not hydrolyze each of these substrates, however hydrolyzes efficiently neutral oligosaccharide. Only the isozyme A is responsible for the degradation of GM2 gangliosides in the presence of GM2A. This is Beta-hexosaminidase subunit alpha from Mus musculus (Mouse).